We begin with the raw amino-acid sequence, 338 residues long: MAPIKIGINGFGRIGRLVARVILQREDCELVAVNDPFITTEYMTYMFKYDSVHGQWKHHDIKVKDEKTLLFGEKAVTVFGNRNPEEIPWGGTGADYVVESTGVFTDKDKAAAHLKGGAKKVIISAPSKDAPMFVVGVNEHEYKPELDIVSNASCTTNCLAPLAKVINDRFGIVEGLMTTVHSITATQKTVDGPSMKDWRGGRAASFNIIPSSTGAAKAVGKVLPSLNGKLTGMSFRVPTVDVSVVDLTVRIEKPATYEQVKAAIKEESEGKLKGILGYTEDDVVSTDFVGDNRSSIFDAKAGIALNDNFIKLVSWYDNEWGYSTRVVDLIAHIHKTCQ.

NAD(+) is bound by residues 13–14 (RI), aspartate 35, and arginine 82. D-glyceraldehyde 3-phosphate contacts are provided by residues 153-155 (SCT), threonine 184, 213-214 (TG), and arginine 236. Cysteine 154 acts as the Nucleophile in catalysis. Asparagine 318 serves as a coordination point for NAD(+).

Belongs to the glyceraldehyde-3-phosphate dehydrogenase family. As to quaternary structure, homotetramer.

It localises to the cytoplasm. The catalysed reaction is D-glyceraldehyde 3-phosphate + phosphate + NAD(+) = (2R)-3-phospho-glyceroyl phosphate + NADH + H(+). It functions in the pathway carbohydrate degradation; glycolysis; pyruvate from D-glyceraldehyde 3-phosphate: step 1/5. In terms of biological role, key enzyme in glycolysis that catalyzes the first step of the pathway by converting D-glyceraldehyde 3-phosphate (G3P) into 3-phospho-D-glyceroyl phosphate. Essential for the maintenance of cellular ATP levels and carbohydrate metabolism. The sequence is that of Glyceraldehyde-3-phosphate dehydrogenase, cytosolic (GAPC) from Dianthus caryophyllus (Carnation).